Reading from the N-terminus, the 452-residue chain is Pup--protein ligase (452 aa).

Glu9 contacts Mg(2+). An ATP-binding site is contributed by Arg53. Tyr55 lines the Mg(2+) pocket. Asp57 (proton acceptor) is an active-site residue. Glu63 lines the Mg(2+) pocket. ATP is bound by residues Thr66 and Trp419.

It belongs to the Pup ligase/Pup deamidase family. Pup-conjugating enzyme subfamily.

The catalysed reaction is ATP + [prokaryotic ubiquitin-like protein]-L-glutamate + [protein]-L-lysine = ADP + phosphate + N(6)-([prokaryotic ubiquitin-like protein]-gamma-L-glutamyl)-[protein]-L-lysine.. It functions in the pathway protein degradation; proteasomal Pup-dependent pathway. It participates in protein modification; protein pupylation. Its function is as follows. Catalyzes the covalent attachment of the prokaryotic ubiquitin-like protein modifier Pup to the proteasomal substrate proteins, thereby targeting them for proteasomal degradation. This tagging system is termed pupylation. The ligation reaction involves the side-chain carboxylate of the C-terminal glutamate of Pup and the side-chain amino group of a substrate lysine. This is Pup--protein ligase from Nakamurella multipartita (strain ATCC 700099 / DSM 44233 / CIP 104796 / JCM 9543 / NBRC 105858 / Y-104) (Microsphaera multipartita).